The sequence spans 489 residues: Dipeptide and tripeptide permease B (489 aa).

At 1-27 the chain is on the cytoplasmic side; it reads MNKPASIGLLQQPKPFFMIFFVELWER. The chain crosses the membrane as a helical span at residues 28-48; it reads FGYYGVQGILAVYFVHKLGFS. The Periplasmic segment spans residues 49–52; the sequence is QEQA. Residues 53 to 73 form a helical membrane-spanning segment; that stretch reads FTTFGAFAALVYGLIAIGGYV. Residues 74–82 lie on the Cytoplasmic side of the membrane; sequence GDHLLGTKR. The helical transmembrane segment at 83–103 threads the bilayer; it reads TIVLGAIVLTVGYFMTGLSIL. The Periplasmic portion of the chain corresponds to 104-106; the sequence is KPE. A helical membrane pass occupies residues 107-127; that stretch reads LIFYALGTIAVGNGLFKANPA. Topologically, residues 128–146 are cytoplasmic; sequence SLLSKCYPPKDPRLDGAFT. The helical transmembrane segment at 147-167 threads the bilayer; it reads LFYMSINIGSLFSLAIAPVIA. Residues 168-171 are Periplasmic-facing; it reads EKFG. The helical transmembrane segment at 172–192 threads the bilayer; the sequence is YAVTYNICGIGLIIALLVYVL. Over 193-212 the chain is Cytoplasmic; it reads YRNTVRNIGSEPDHRPINYK. The next 2 helical transmembrane spans lie at 213-233 and 234-254; these read NLLL…WLMH and NVKI…FIFF. At 255–267 the chain is on the cytoplasmic side; sequence REAFKQDKVGRNK. The chain crosses the membrane as a helical span at residues 268-288; it reads MFVAFILMLQAIVFFILYAQM. Residues 289-311 are Periplasmic-facing; sequence PTSLNFFAINNVHHQLLGFNINP. A helical membrane pass occupies residues 312-332; the sequence is VSFQALNPFWIVVASPILAAL. The Cytoplasmic portion of the chain corresponds to 333–350; sequence YTHWGSRSKDLTMPAKFT. The helical transmembrane segment at 351–371 threads the bilayer; it reads VGMFLCSLGFLTAAAAGLWFA. The Periplasmic segment spans residues 372 to 375; it reads DEQG. A helical transmembrane segment spans residues 376–396; the sequence is LTSPWFIVLVYLFQSLGELMI. Residues 397 to 419 lie on the Cytoplasmic side of the membrane; the sequence is SALGLAMVAALVPQYLMGFILGM. The chain crosses the membrane as a helical span at residues 420–440; that stretch reads WYLTQATSFLLGGYVAAFTAI. The Periplasmic portion of the chain corresponds to 441–456; the sequence is PEGITDPLETLPVYTN. The chain crosses the membrane as a helical span at residues 457-477; the sequence is VFGKIGITTFIVAIIMAITVP. Residues 478 to 489 lie on the Cytoplasmic side of the membrane; that stretch reads LLNRMMNGKQKA.

This sequence belongs to the major facilitator superfamily. Proton-dependent oligopeptide transporter (POT/PTR) (TC 2.A.17) family. DtpB subfamily.

It localises to the cell inner membrane. In terms of biological role, proton-dependent permease that transports di- and tripeptides. The sequence is that of Dipeptide and tripeptide permease B from Photorhabdus asymbiotica subsp. asymbiotica (strain ATCC 43949 / 3105-77) (Xenorhabdus luminescens (strain 2)).